We begin with the raw amino-acid sequence, 591 residues long: MRGSVIGAERSGQTIMVALVLMVGSFYTGSLFGTNQPIYVSHPSSHSASSKFANKIELTYRRLPLVIPESGMNVCPLEFNEYIPCHNVTYVHQLLPSLNLSRREDLERHCPPLEHRLFCLVPPPNDYKIPIRWPTSRDYVWRSNVNHTHLAQVKGGQNWVHEQGQFWWFPGGGTHFKHGAAEYIQRLGNMMTNETGDLRSAGVVQVLDVGCGVASFAAYLLPLGIQTISFAPKDGHENQIQFALERGIGAMISAVATKQLPYPAASFEMVHCSRCRVDWHTNDGILLKEVHRLLRPNGFFVYSSPPAYRKDKEYPMIWDKLVNLTSAMCWKLISRKVQTAIWIKEEKEVCLKQKAELKLISLCDVEDVLKPSWKVPLKDCVQISGQTEERPSSLAERLSAYPATLRKIGISEDEYTSDTVFWREQVNHYWRLMNVNETEVRNVMDMNAFIGGFAAAMNSYPVWVMNIVPATMNDTLSGIFERGLNGAFHDWCEAFSTYPRTYDLVHSDHVFSHYNKSYGDGCLLEDIMLEMDRIVRPQGFVIIRDEEYIISRIRGLAPKFLWEVETHELENKDKKITESVLFCRKRFWAII.

At 1–13 (MRGSVIGAERSGQ) the chain is on the cytoplasmic side. Residues 14 to 34 (TIMVALVLMVGSFYTGSLFGT) traverse the membrane as a helical; Signal-anchor for type II membrane protein segment. At 35–591 (NQPIYVSHPS…FCRKRFWAII (557 aa)) the chain is on the lumenal side. Asn-87, Asn-99, Asn-146, Asn-193, Asn-323, Asn-436, Asn-473, and Asn-515 each carry an N-linked (GlcNAc...) asparagine glycan.

The protein belongs to the methyltransferase superfamily.

The protein localises to the endoplasmic reticulum membrane. The protein is Probable methyltransferase PMT6 of Arabidopsis thaliana (Mouse-ear cress).